The primary structure comprises 169 residues: uncharacterized protein (169 aa).

The Nudix hydrolase domain maps to 28–157 (ELHLVIHVCI…EFIPYFFLNQ (130 aa)). The Nudix box signature appears at 65–87 (AGSALKGETSQQAAEREVQEELG). Glu-81 and Glu-85 together coordinate Mg(2+).

This sequence belongs to the Nudix hydrolase family. Mg(2+) is required as a cofactor.

This is an uncharacterized protein from Listeria monocytogenes serovar 1/2a (strain ATCC BAA-679 / EGD-e).